Consider the following 148-residue polypeptide: Hemoglobin subunit beta-4 (148 aa).

Positions 3-148 constitute a Globin domain; sequence DWTDPERSAI…VVSALGRQYH (146 aa). Histidine 64 and histidine 93 together coordinate heme b.

This sequence belongs to the globin family. In terms of assembly, heterotetramer of two alpha chains and two beta chains. As to expression, red blood cells.

Functionally, involved in oxygen transport from gills to the various peripheral tissues. In Oncorhynchus mykiss (Rainbow trout), this protein is Hemoglobin subunit beta-4 (hbb4).